The sequence spans 264 residues: Stress response regulator protein 1 (264 aa).

Residues Ile50 to Thr74 form a disordered region. Acidic residues predominate over residues Asp62–Thr74. The Response regulatory domain maps to Arg138–Asp256. Position 189 is a 4-aspartylphosphate (Asp189).

Functionally, required for stress adaptation, morphogenesis and virulence. The protein is Stress response regulator protein 1 (SRR1) of Candida tropicalis (strain ATCC MYA-3404 / T1) (Yeast).